The sequence spans 112 residues: Large ribosomal subunit protein bL20c (112 aa).

It belongs to the bacterial ribosomal protein bL20 family.

It localises to the plastid. Its subcellular location is the chloroplast. Binds directly to 23S ribosomal RNA and is necessary for the in vitro assembly process of the 50S ribosomal subunit. It is not involved in the protein synthesizing functions of that subunit. The sequence is that of Large ribosomal subunit protein bL20c (rpl20) from Chlamydomonas reinhardtii (Chlamydomonas smithii).